The following is a 635-amino-acid chain: Threonine--tRNA ligase (635 aa).

Positions 1-61 (MPIITLPDGN…EKDANIAIIT (61 aa)) constitute a TGS domain. Residues 242–533 (DHRKIGKQLD…LTEEYAGVYP (292 aa)) form a catalytic region. Residues Cys-333, His-384, and His-510 each contribute to the Zn(2+) site.

Belongs to the class-II aminoacyl-tRNA synthetase family. In terms of assembly, homodimer. Requires Zn(2+) as cofactor.

The protein resides in the cytoplasm. The catalysed reaction is tRNA(Thr) + L-threonine + ATP = L-threonyl-tRNA(Thr) + AMP + diphosphate + H(+). In terms of biological role, catalyzes the attachment of threonine to tRNA(Thr) in a two-step reaction: L-threonine is first activated by ATP to form Thr-AMP and then transferred to the acceptor end of tRNA(Thr). Also edits incorrectly charged L-seryl-tRNA(Thr). This Psychromonas ingrahamii (strain DSM 17664 / CCUG 51855 / 37) protein is Threonine--tRNA ligase.